The primary structure comprises 298 residues: ATP phosphoribosyltransferase (298 aa).

It belongs to the ATP phosphoribosyltransferase family. Long subfamily. Requires Mg(2+) as cofactor.

It is found in the cytoplasm. The enzyme catalyses 1-(5-phospho-beta-D-ribosyl)-ATP + diphosphate = 5-phospho-alpha-D-ribose 1-diphosphate + ATP. The protein operates within amino-acid biosynthesis; L-histidine biosynthesis; L-histidine from 5-phospho-alpha-D-ribose 1-diphosphate: step 1/9. Feedback inhibited by histidine. Functionally, catalyzes the condensation of ATP and 5-phosphoribose 1-diphosphate to form N'-(5'-phosphoribosyl)-ATP (PR-ATP). Has a crucial role in the pathway because the rate of histidine biosynthesis seems to be controlled primarily by regulation of HisG enzymatic activity. This chain is ATP phosphoribosyltransferase, found in Aeromonas hydrophila subsp. hydrophila (strain ATCC 7966 / DSM 30187 / BCRC 13018 / CCUG 14551 / JCM 1027 / KCTC 2358 / NCIMB 9240 / NCTC 8049).